The sequence spans 337 residues: Pentalenene synthase (337 aa).

The Mg(2+) site is built by aspartate 80 and aspartate 84. Residues 80–84 (DDLFD) carry the DDXXD motif motif. A disulfide bond links cysteine 128 and cysteine 136. Residues asparagine 219, serine 223, and glutamate 227 each coordinate Mg(2+).

It belongs to the terpene synthase family. As to quaternary structure, monomer. Requires Mg(2+) as cofactor.

The catalysed reaction is (2E,6E)-farnesyl diphosphate = pentalenene + diphosphate. It functions in the pathway sesquiterpene biosynthesis; pentalenene biosynthesis; pentalenene from farnesyl diphosphate: step 1/1. Its pathway is antibiotic biosynthesis; pentalenolactone biosynthesis. Functionally, catalyzes the cyclization of farnesyl diphosphate (FPP) to the tricyclic sesquiterpene pentalenene, which is the hydrocarbon precursor of the pentalenolactone family of antibiotics produced by a variety of Streptomyces species. The protein is Pentalenene synthase (penA) of Streptomyces exfoliatus (Streptomyces hydrogenans).